Consider the following 225-residue polypeptide: Alpha-tubulin N-acetyltransferase 1 (225 aa).

Residues 1-190 (MEFPFDVDAL…NNFVIFEGFF (190 aa)) enclose the N-acetyltransferase domain. The residue at position 56 (lysine 56) is an N6-acetyllysine; by autocatalysis. Position 124–137 (124–137 (FYIHESLQRHGHGR)) interacts with acetyl-CoA. Lysine 146 carries the post-translational modification N6-acetyllysine; by autocatalysis. An acetyl-CoA-binding site is contributed by 160 to 169 (SQKLLKFLNK). Residues 195–225 (PPARKLPPKRAEGDIKPYSSSDRESGLPQGW) are disordered. The span at 203–219 (KRAEGDIKPYSSSDRES) shows a compositional bias: basic and acidic residues. Residue lysine 210 is modified to N6-acetyllysine; by autocatalysis.

It belongs to the acetyltransferase ATAT1 family. In terms of assembly, component of the BBSome complex. Interacts with AP2 alpha-adaptins, including AP2A2, but not with AP1 gamma-adaptin (AP1G1/AP1G2); this interaction is required for efficient alpha-tubulin acetylation, hence clathrin-coated pits are sites of microtubule acetylation. Autoacetylation strongly increases tubulin acetylation.

It localises to the cytoplasm. The protein localises to the membrane. The protein resides in the clathrin-coated pit. It is found in the cell junction. Its subcellular location is the focal adhesion. It localises to the cell projection. The protein localises to the axon. The protein resides in the cytoskeleton. It is found in the spindle. It carries out the reaction L-lysyl-[alpha-tubulin] + acetyl-CoA = N(6)-acetyl-L-lysyl-[alpha-tubulin] + CoA + H(+). In terms of biological role, specifically acetylates 'Lys-40' in alpha-tubulin on the lumenal side of microtubules. Promotes microtubule destabilization and accelerates microtubule dynamics; this activity may be independent of acetylation activity. Acetylates alpha-tubulin with a slow enzymatic rate, due to a catalytic site that is not optimized for acetyl transfer. Enters the microtubule through each end and diffuses quickly throughout the lumen of microtubules. Acetylates only long/old microtubules because of its slow acetylation rate since it does not have time to act on dynamically unstable microtubules before the enzyme is released. Required for normal sperm flagellar function. Promotes directional cell locomotion and chemotaxis, through AP2A2-dependent acetylation of alpha-tubulin at clathrin-coated pits that are concentrated at the leading edge of migrating cells. May facilitate primary cilium assembly. This Bos taurus (Bovine) protein is Alpha-tubulin N-acetyltransferase 1.